Here is an 877-residue protein sequence, read N- to C-terminus: Kinetochore null protein 2 (877 aa).

The 88-residue stretch at 20–107 (IRLNLWSMKF…SNGIPENWAD (88 aa)) folds into the SANTA domain. Disordered stretches follow at residues 122–315 (RPIQ…SKSV), 338–535 (FEST…ESLN), and 549–604 (MMFG…NDSI). A coiled-coil region spans residues 153-211 (QKNSENEKERNRREREEQQTKERERRLEEEKQRRDAEAEAERRRKEEEELEEANYTLRA). A compositionally biased stretch (basic and acidic residues) spans 156–199 (SENEKERNRREREEQQTKERERRLEEEKQRRDAEAEAERRRKEE). The span at 251 to 279 (IASSTPQQKQRLADGANNQIPPTQKSQDS) shows a compositional bias: polar residues. Basic and acidic residues-rich tracts occupy residues 359–385 (EPRH…DNSR), 394–444 (RRHE…RGRD), and 453–480 (VRFE…DYGR). Residues 491-549 (EDEEKLNAIVRREKELRNRLQKSQKASSSSYRHRSNSSDAEESLNEWDIENQELLDNSM) adopt a coiled-coil conformation. A compositionally biased stretch (low complexity) spans 511–520 (QKSQKASSSS). Residues 573 to 583 (RSKPANSTKSP) show a composition bias toward polar residues. The segment covering 592–601 (ASLEDNRDLN) has biased composition (basic and acidic residues). The 62-residue stretch at 617 to 678 (VAKKITWRKQ…AITRLKWVEP (62 aa)) folds into the Myb-like domain. 2 disordered regions span residues 757 to 785 (RGGT…FNSP) and 808 to 877 (MQAR…TSIY). Composition is skewed to polar residues over residues 775–785 (SRGNNSTFNSP) and 819–836 (SSSM…TSIS). The segment covering 856 to 871 (EDDENEDNDDDDDMRE) has biased composition (acidic residues).

It belongs to the KNL2 family. As to quaternary structure, interacts with hcp-3.

The protein resides in the nucleus. It is found in the chromosome. The protein localises to the centromere. Its subcellular location is the kinetochore. Its function is as follows. Required for the recruitment of hcp-3, hcp-4, knl-1, bub-1 and lin-53 to kinetochores, kinetochore assembly, chromosome condensation and chromosome segregation in meiosis and mitosis. This is Kinetochore null protein 2 from Caenorhabditis elegans.